A 513-amino-acid polypeptide reads, in one-letter code: ATP synthase subunit alpha (513 aa).

169 to 176 (GDRQTGKT) contributes to the ATP binding site.

The protein belongs to the ATPase alpha/beta chains family. F-type ATPases have 2 components, CF(1) - the catalytic core - and CF(0) - the membrane proton channel. CF(1) has five subunits: alpha(3), beta(3), gamma(1), delta(1), epsilon(1). CF(0) has three main subunits: a(1), b(2) and c(9-12). The alpha and beta chains form an alternating ring which encloses part of the gamma chain. CF(1) is attached to CF(0) by a central stalk formed by the gamma and epsilon chains, while a peripheral stalk is formed by the delta and b chains.

The protein localises to the cell inner membrane. The enzyme catalyses ATP + H2O + 4 H(+)(in) = ADP + phosphate + 5 H(+)(out). Its function is as follows. Produces ATP from ADP in the presence of a proton gradient across the membrane. The alpha chain is a regulatory subunit. The polypeptide is ATP synthase subunit alpha (Shewanella denitrificans (strain OS217 / ATCC BAA-1090 / DSM 15013)).